The following is a 704-amino-acid chain: Protein polyglycylase TTLL10 (704 aa).

Disordered regions lie at residues 1 to 32, 46 to 125, and 137 to 170; these read MALH…LPSP, GHRA…SVKE, and DADD…PGQG. Positions 93–105 are enriched in basic residues; the sequence is VSSKRSKRSRIHP. Residues 114–125 are compositionally biased toward basic and acidic residues; the sequence is THEKQMGSSVKE. The 372-residue stretch at 169–540 folds into the TTL domain; it reads QGPFFYIGGT…TCQKSLHSQK (372 aa). ATP-binding positions include Lys301, 307–308, 350–353, 363–365, and 406–407; these read QG, QRYV, KFD, and TN. Residue Gln307 participates in a protein binding. Positions 486, 499, and 501 each coordinate Mg(2+). A disordered region spans residues 565 to 704; that stretch reads LASSRPLNRL…EQRSTSHRGS (140 aa). 2 stretches are compositionally biased toward pro residues: residues 576-588 and 596-612; these read NPNP…ANPH and HPHP…PPRP. 2 stretches are compositionally biased toward low complexity: residues 616-629 and 654-667; these read AASS…AAIS and SDSS…SEPS.

Mg(2+) serves as cofactor. Highly expressed in testis. Expressed in brain, heart, kidney, liver, lung, muscle and trachea.

The protein resides in the cytoplasm. The protein localises to the cytoskeleton. It is found in the cell projection. It localises to the cilium. Its subcellular location is the cilium axoneme. The catalysed reaction is (glycyl)(n)-glycyl-L-glutamyl-[protein] + glycine + ATP = (glycyl)(n+1)-glycyl-L-glutamyl-[protein] + ADP + phosphate + H(+). Its function is as follows. Polyglycylase which modifies both tubulin and non-tubulin proteins, generating polyglycine side chains of variable lengths on the gamma-carboxyl groups of specific glutamate residues of target proteins. Involved in the elongation step rather than the initiation step of the polyglycylation reaction. Polyglycylates alpha-tubulin and beta-tubulin. Polyglycylates non-tubulin proteins such as nucleosome assembly protein NAP1. The chain is Protein polyglycylase TTLL10 from Mus musculus (Mouse).